We begin with the raw amino-acid sequence, 185 residues long: Translation initiation factor IF-3 (185 aa).

The protein belongs to the IF-3 family. In terms of assembly, monomer.

The protein resides in the cytoplasm. In terms of biological role, IF-3 binds to the 30S ribosomal subunit and shifts the equilibrium between 70S ribosomes and their 50S and 30S subunits in favor of the free subunits, thus enhancing the availability of 30S subunits on which protein synthesis initiation begins. The sequence is that of Translation initiation factor IF-3 from Rickettsia prowazekii (strain Madrid E).